A 1128-amino-acid chain; its full sequence is Zinc finger protein 654 (1128 aa).

A disordered region spans residues Gly-498 to His-523. C2H2-type zinc fingers lie at residues Phe-572–His-594, Phe-746–His-771, Gly-787–His-809, Tyr-815–His-839, and Ala-844–His-868. The interval Asp-891 to Ser-951 is disordered. 2 stretches are compositionally biased toward polar residues: residues Asn-903–Ser-915 and Ser-937–Ser-951. A phosphoserine mark is found at Ser-1123 and Ser-1127.

It belongs to the krueppel C2H2-type zinc-finger protein family.

Its subcellular location is the nucleus. In terms of biological role, may be involved in transcriptional regulation. The protein is Zinc finger protein 654 of Homo sapiens (Human).